A 185-amino-acid polypeptide reads, in one-letter code: Ribosome-recycling factor (185 aa).

This sequence belongs to the RRF family.

It localises to the cytoplasm. Its function is as follows. Responsible for the release of ribosomes from messenger RNA at the termination of protein biosynthesis. May increase the efficiency of translation by recycling ribosomes from one round of translation to another. The sequence is that of Ribosome-recycling factor from Yersinia enterocolitica serotype O:8 / biotype 1B (strain NCTC 13174 / 8081).